A 2021-amino-acid polypeptide reads, in one-letter code: U3 small nucleolar RNA-associated protein 10 (2021 aa).

HEAT repeat units follow at residues 837-875, 976-1014, 1281-1319, 1935-1973, and 1977-2015; these read PVDFQVVLPQILIALQDSDKDVRRVAVDVLRSVEGGEGM, TSILRSAIPLLASLFDDKSEESLWLSSLPDGQQALYVQA, EKTVSRIVPVMTQSLKEKAQNSLELYTKSLTFLSIFTDM, ENVLRRLNTAVCLATRSDDPKVRLAALDALSAIWDAQAE, and GLVPETVSEFLAELLEDESKDVEIAARGVLAKIEKVTGS.

It belongs to the HEATR1/UTP10 family. Component of the ribosomal small subunit (SSU) processome.

The protein localises to the nucleus. The protein resides in the nucleolus. In terms of biological role, involved in nucleolar processing of pre-18S ribosomal RNA. Involved in ribosome biosynthesis. The protein is U3 small nucleolar RNA-associated protein 10 (UTP10) of Cryptococcus neoformans var. neoformans serotype D (strain B-3501A) (Filobasidiella neoformans).